Reading from the N-terminus, the 136-residue chain is Putative pre-16S rRNA nuclease (136 aa).

It belongs to the YqgF nuclease family.

It is found in the cytoplasm. Its function is as follows. Could be a nuclease involved in processing of the 5'-end of pre-16S rRNA. This is Putative pre-16S rRNA nuclease from Francisella tularensis subsp. tularensis (strain WY96-3418).